Reading from the N-terminus, the 63-residue chain is MKAQEIREKSVEALQQQLLELLREQFNLRMQKATGQLSQTHLLKQVRRDIARVKTVLNEKAGD.

This sequence belongs to the universal ribosomal protein uL29 family.

This Chromohalobacter salexigens (strain ATCC BAA-138 / DSM 3043 / CIP 106854 / NCIMB 13768 / 1H11) protein is Large ribosomal subunit protein uL29.